The following is a 284-amino-acid chain: Tropomyosin (284 aa).

Positions Met-1–Tyr-284 form a coiled coil. Basic and acidic residues-rich tracts occupy residues Leu-29–Glu-42 and Ala-111–Ala-136. Disordered stretches follow at residues Leu-29 to Arg-49 and Ala-111 to Lys-149.

Belongs to the tropomyosin family.

Tropomyosin, in association with the troponin complex, plays a central role in the calcium dependent regulation of muscle contraction. In Clonorchis sinensis (Chinese liver fluke), this protein is Tropomyosin.